The primary structure comprises 262 residues: Putative hydro-lyase Mflv_5194 (262 aa).

This sequence belongs to the D-glutamate cyclase family.

This chain is Putative hydro-lyase Mflv_5194, found in Mycolicibacterium gilvum (strain PYR-GCK) (Mycobacterium gilvum (strain PYR-GCK)).